Here is a 253-residue protein sequence, read N- to C-terminus: ATP synthase subunit b 1 (253 aa).

A helical transmembrane segment spans residues 5–27 (GWTVALQAVNFLILVLLLRHFLY).

It belongs to the ATPase B chain family. F-type ATPases have 2 components, F(1) - the catalytic core - and F(0) - the membrane proton channel. F(1) has five subunits: alpha(3), beta(3), gamma(1), delta(1), epsilon(1). F(0) has three main subunits: a(1), b(2) and c(10-14). The alpha and beta chains form an alternating ring which encloses part of the gamma chain. F(1) is attached to F(0) by a central stalk formed by the gamma and epsilon chains, while a peripheral stalk is formed by the delta and b chains.

It is found in the cell inner membrane. F(1)F(0) ATP synthase produces ATP from ADP in the presence of a proton or sodium gradient. F-type ATPases consist of two structural domains, F(1) containing the extramembraneous catalytic core and F(0) containing the membrane proton channel, linked together by a central stalk and a peripheral stalk. During catalysis, ATP synthesis in the catalytic domain of F(1) is coupled via a rotary mechanism of the central stalk subunits to proton translocation. Its function is as follows. Component of the F(0) channel, it forms part of the peripheral stalk, linking F(1) to F(0). The chain is ATP synthase subunit b 1 from Rhodospirillum centenum (strain ATCC 51521 / SW).